A 207-amino-acid polypeptide reads, in one-letter code: 3-isopropylmalate dehydratase small subunit (207 aa).

Belongs to the LeuD family. LeuD type 1 subfamily. As to quaternary structure, heterodimer of LeuC and LeuD.

The catalysed reaction is (2R,3S)-3-isopropylmalate = (2S)-2-isopropylmalate. The protein operates within amino-acid biosynthesis; L-leucine biosynthesis; L-leucine from 3-methyl-2-oxobutanoate: step 2/4. Catalyzes the isomerization between 2-isopropylmalate and 3-isopropylmalate, via the formation of 2-isopropylmaleate. The chain is 3-isopropylmalate dehydratase small subunit from Rhodospirillum rubrum (strain ATCC 11170 / ATH 1.1.1 / DSM 467 / LMG 4362 / NCIMB 8255 / S1).